Here is a 600-residue protein sequence, read N- to C-terminus: Aspartate--tRNA(Asp/Asn) ligase (600 aa).

L-aspartate is bound at residue Glu-174. The segment at 198 to 201 (QLFK) is aspartate. Arg-220 contributes to the L-aspartate binding site. ATP-binding positions include 220–222 (RDE) and Gln-229. An L-aspartate-binding site is contributed by His-457. Glu-491 is a binding site for ATP. L-aspartate is bound at residue Arg-498. 543–546 (GLDR) serves as a coordination point for ATP.

Belongs to the class-II aminoacyl-tRNA synthetase family. Type 1 subfamily. Homodimer.

Its subcellular location is the cytoplasm. It carries out the reaction tRNA(Asx) + L-aspartate + ATP = L-aspartyl-tRNA(Asx) + AMP + diphosphate. In terms of biological role, aspartyl-tRNA synthetase with relaxed tRNA specificity since it is able to aspartylate not only its cognate tRNA(Asp) but also tRNA(Asn). Reaction proceeds in two steps: L-aspartate is first activated by ATP to form Asp-AMP and then transferred to the acceptor end of tRNA(Asp/Asn). The chain is Aspartate--tRNA(Asp/Asn) ligase from Burkholderia orbicola (strain AU 1054).